We begin with the raw amino-acid sequence, 519 residues long: Glutamate--cysteine ligase (519 aa).

The protein belongs to the glutamate--cysteine ligase type 1 family. Type 1 subfamily.

It carries out the reaction L-cysteine + L-glutamate + ATP = gamma-L-glutamyl-L-cysteine + ADP + phosphate + H(+). It functions in the pathway sulfur metabolism; glutathione biosynthesis; glutathione from L-cysteine and L-glutamate: step 1/2. The sequence is that of Glutamate--cysteine ligase from Erwinia tasmaniensis (strain DSM 17950 / CFBP 7177 / CIP 109463 / NCPPB 4357 / Et1/99).